Here is a 361-residue protein sequence, read N- to C-terminus: 3-dehydroquinate synthase (361 aa).

NAD(+)-binding positions include 72–77, 130–131, K142, and K151; these read SGEKEK and TT. Zn(2+)-binding residues include E184, H247, and H264.

The protein belongs to the sugar phosphate cyclases superfamily. Dehydroquinate synthase family. Co(2+) serves as cofactor. The cofactor is Zn(2+). It depends on NAD(+) as a cofactor.

The protein localises to the cytoplasm. It carries out the reaction 7-phospho-2-dehydro-3-deoxy-D-arabino-heptonate = 3-dehydroquinate + phosphate. The protein operates within metabolic intermediate biosynthesis; chorismate biosynthesis; chorismate from D-erythrose 4-phosphate and phosphoenolpyruvate: step 2/7. Its function is as follows. Catalyzes the conversion of 3-deoxy-D-arabino-heptulosonate 7-phosphate (DAHP) to dehydroquinate (DHQ). The polypeptide is 3-dehydroquinate synthase (Bacillus cereus (strain AH820)).